The following is an 82-amino-acid chain: ATP synthase subunit c, chloroplastic (82 aa).

2 helical membrane passes run 3–23 (PLISAASVLAAGLAVGLASIG) and 57–77 (FAFMESLTIYGLVVALALLFA).

This sequence belongs to the ATPase C chain family. F-type ATPases have 2 components, F(1) - the catalytic core - and F(0) - the membrane proton channel. F(1) has five subunits: alpha(3), beta(3), gamma(1), delta(1), epsilon(1). F(0) has four main subunits: a(1), b(1), b'(1) and c(10-14). The alpha and beta chains form an alternating ring which encloses part of the gamma chain. F(1) is attached to F(0) by a central stalk formed by the gamma and epsilon chains, while a peripheral stalk is formed by the delta, b and b' chains.

It is found in the plastid. Its subcellular location is the chloroplast thylakoid membrane. Functionally, f(1)F(0) ATP synthase produces ATP from ADP in the presence of a proton or sodium gradient. F-type ATPases consist of two structural domains, F(1) containing the extramembraneous catalytic core and F(0) containing the membrane proton channel, linked together by a central stalk and a peripheral stalk. During catalysis, ATP synthesis in the catalytic domain of F(1) is coupled via a rotary mechanism of the central stalk subunits to proton translocation. In terms of biological role, key component of the F(0) channel; it plays a direct role in translocation across the membrane. A homomeric c-ring of between 10-14 subunits forms the central stalk rotor element with the F(1) delta and epsilon subunits. This Mesostigma viride (Green alga) protein is ATP synthase subunit c, chloroplastic.